The primary structure comprises 243 residues: 3-deoxy-manno-octulosonate cytidylyltransferase (243 aa).

It belongs to the KdsB family.

The protein resides in the cytoplasm. It catalyses the reaction 3-deoxy-alpha-D-manno-oct-2-ulosonate + CTP = CMP-3-deoxy-beta-D-manno-octulosonate + diphosphate. It functions in the pathway nucleotide-sugar biosynthesis; CMP-3-deoxy-D-manno-octulosonate biosynthesis; CMP-3-deoxy-D-manno-octulosonate from 3-deoxy-D-manno-octulosonate and CTP: step 1/1. It participates in bacterial outer membrane biogenesis; lipopolysaccharide biosynthesis. Its function is as follows. Activates KDO (a required 8-carbon sugar) for incorporation into bacterial lipopolysaccharide in Gram-negative bacteria. The protein is 3-deoxy-manno-octulosonate cytidylyltransferase of Bartonella henselae (strain ATCC 49882 / DSM 28221 / CCUG 30454 / Houston 1) (Rochalimaea henselae).